An 88-amino-acid polypeptide reads, in one-letter code: Small ribosomal subunit protein bS16 (88 aa).

The protein belongs to the bacterial ribosomal protein bS16 family.

The protein is Small ribosomal subunit protein bS16 of Staphylococcus saprophyticus subsp. saprophyticus (strain ATCC 15305 / DSM 20229 / NCIMB 8711 / NCTC 7292 / S-41).